A 228-amino-acid polypeptide reads, in one-letter code: DNA-binding response regulator MtrA (228 aa).

The Response regulatory domain maps to 7 to 120 (RILVVDDDPS…ELVARVRARL (114 aa)). The residue at position 56 (Asp-56) is a 4-aspartylphosphate. Positions 128 to 227 (AEMLSIGDVE…VRGVGYKAGP (100 aa)) form a DNA-binding region, ompR/PhoB-type.

In terms of assembly, probably a monomer when inactive, phosphorylation may permit it to oligomerize. The monomeric form does not seem to be phosphorylated. In terms of processing, phosphorylated by MtrB.

It localises to the cytoplasm. Member of the two-component regulatory system MtrA/MtrB, responding to environmental signals. Controls expression of a number of genes including dnaA, ripA, fbpB and probably itself. Probably plays a role in cell division. This chain is DNA-binding response regulator MtrA (mtrA), found in Mycolicibacterium smegmatis (strain ATCC 700084 / mc(2)155) (Mycobacterium smegmatis).